Consider the following 258-residue polypeptide: Small ribosomal subunit protein eS1 (258 aa).

The disordered stretch occupies residues 235–258; sequence VASSGDAGSAVRRDGYEPPVQESV.

This sequence belongs to the eukaryotic ribosomal protein eS1 family. In terms of assembly, component of the small ribosomal subunit. Mature ribosomes consist of a small (40S) and a large (60S) subunit. The 40S subunit contains about 33 different proteins and 1 molecule of RNA (18S). The 60S subunit contains about 49 different proteins and 3 molecules of RNA (28S, 5.8S and 5S).

The protein resides in the cytoplasm. In Trichoplax adhaerens (Trichoplax reptans), this protein is Small ribosomal subunit protein eS1.